The following is a 444-amino-acid chain: Methylenetetrahydrofolate--tRNA-(uracil-5-)-methyltransferase TrmFO (444 aa).

Residue 10-15 (GAGLAG) participates in FAD binding.

The protein belongs to the MnmG family. TrmFO subfamily. The cofactor is FAD.

Its subcellular location is the cytoplasm. It catalyses the reaction uridine(54) in tRNA + (6R)-5,10-methylene-5,6,7,8-tetrahydrofolate + NADH + H(+) = 5-methyluridine(54) in tRNA + (6S)-5,6,7,8-tetrahydrofolate + NAD(+). The enzyme catalyses uridine(54) in tRNA + (6R)-5,10-methylene-5,6,7,8-tetrahydrofolate + NADPH + H(+) = 5-methyluridine(54) in tRNA + (6S)-5,6,7,8-tetrahydrofolate + NADP(+). Functionally, catalyzes the folate-dependent formation of 5-methyl-uridine at position 54 (M-5-U54) in all tRNAs. The chain is Methylenetetrahydrofolate--tRNA-(uracil-5-)-methyltransferase TrmFO from Streptococcus pneumoniae (strain 70585).